Consider the following 130-residue polypeptide: Small ribosomal subunit protein uS9 (130 aa).

The disordered stretch occupies residues 110–130; the sequence is AKERKKYGRKGARARFQFSKR. Residues 111 to 130 are compositionally biased toward basic residues; sequence KERKKYGRKGARARFQFSKR.

This sequence belongs to the universal ribosomal protein uS9 family.

In Syntrophotalea carbinolica (strain DSM 2380 / NBRC 103641 / GraBd1) (Pelobacter carbinolicus), this protein is Small ribosomal subunit protein uS9.